Consider the following 623-residue polypeptide: MAIQTQLPCDGDGVCMRCQVNPPSEETLTCGTCVTPWHVSCLLPESLASSTGDWECPDCSGVVVPSAAPGTGISGPESSGSVLVTAIRAIQADVTLTEAEKAKKRQRLMSGGGDDGVDDEEKKKLEIFCSICIQLPERPVTTPCGHNFCLKCFEKWAVGQGKLTCMICRSKIPRHVAKNPRINLALVSAIRLANVTKCSGEATAAKVHHIIRNQDRPDKAFTTERAVKTGKANAASGKFFVTIPRDHFGPIPAANDVTRNQGVLVGESWEDRQECRQWGVHFPHVAGIAGQAAVGAQSVALSGGYDDDEDHGEWFLYTGSGGRDLSGNKRVNKIQSSDQAFKNMNEALRLSCKMGYPVRVVRSWKEKRSAYAPAEGVRYDGVYRIEKCWSNVGVQGLHKMCRYLFVRCDNEPAPWTSDEHGDRPRPLPDVPELENATDLFVRKESPSWGFDEAEGRWKWMKSPPVSRMALDTEERKKNKRAKKGNNAMKARLLKEFSCQICRKVLSLPVTTPCAHNFCKACLEAKFAGITQLRDRSNGVRKLRAKKNIMTCPCCTTDLSEFLQNPQVNREMMEIIENFKKSEEEAEVAESSNISEEEGEEESEPPTKKIKMDKNSVGGTSLSA.

Residues 12 to 62 (DGVCMRCQVNPPSEETLTCGTCVTPWHVSCLLPESLASSTGDWECPDCSGV) form a PHD-type zinc finger. Residues 129–169 (CSICIQLPERPVTTPCGHNFCLKCFEKWAVGQGKLTCMICR) form an RING-type 1 zinc finger. A YDG domain is found at 258 to 407 (TRNQGVLVGE…HKMCRYLFVR (150 aa)). The segment at 498-555 (CQICRKVLSLPVTTPCAHNFCKACLEAKFAGITQLRDRSNGVRKLRAKKNIMTCPCCT) adopts an RING-type 2 zinc-finger fold. Residues 580 to 623 (KSEEEAEVAESSNISEEEGEEESEPPTKKIKMDKNSVGGTSLSA) are disordered. The segment covering 594-603 (SEEEGEEESE) has biased composition (acidic residues). The segment covering 604 to 613 (PPTKKIKMDK) has biased composition (basic and acidic residues).

In terms of tissue distribution, expressed in inflorescences.

It is found in the nucleus. It catalyses the reaction S-ubiquitinyl-[E2 ubiquitin-conjugating enzyme]-L-cysteine + [acceptor protein]-L-lysine = [E2 ubiquitin-conjugating enzyme]-L-cysteine + N(6)-ubiquitinyl-[acceptor protein]-L-lysine.. It participates in protein modification; protein ubiquitination. In terms of biological role, E3 ubiquitin-protein ligase. Participates in CpG methylation-dependent transcriptional regulation and epigenetic transcriptional silencing. Mediates ubiquitination with the E2 ubiquitin-conjugating enzyme UBC11. The protein is E3 ubiquitin-protein ligase ORTHRUS 5 (ORTH5) of Arabidopsis thaliana (Mouse-ear cress).